The chain runs to 255 residues: tRNA (guanine-N(7)-)-methyltransferase (255 aa).

S-adenosyl-L-methionine contacts are provided by Glu86, Glu111, Asp138, and Asp161. Residue Asp161 is part of the active site. Substrate is bound by residues Lys165, Asp197, and 234 to 237; that span reads TKFE.

It belongs to the class I-like SAM-binding methyltransferase superfamily. TrmB family.

It carries out the reaction guanosine(46) in tRNA + S-adenosyl-L-methionine = N(7)-methylguanosine(46) in tRNA + S-adenosyl-L-homocysteine. The protein operates within tRNA modification; N(7)-methylguanine-tRNA biosynthesis. Its function is as follows. Catalyzes the formation of N(7)-methylguanine at position 46 (m7G46) in tRNA. In Pasteurella multocida (strain Pm70), this protein is tRNA (guanine-N(7)-)-methyltransferase.